We begin with the raw amino-acid sequence, 513 residues long: Xylose import ATP-binding protein XylG (513 aa).

ABC transporter domains are found at residues 5-242 (LEMK…VERE) and 259-505 (LRIE…LRSE). Residue 37–44 (GENGSGKS) participates in ATP binding.

This sequence belongs to the ABC transporter superfamily. Xylose importer (TC 3.A.1.2.4) family. In terms of assembly, the complex is composed of two ATP-binding proteins (XylG), two transmembrane proteins (XylH) and a solute-binding protein (XylF).

The protein resides in the cell inner membrane. It catalyses the reaction D-xylose(out) + ATP + H2O = D-xylose(in) + ADP + phosphate + H(+). Functionally, part of the ABC transporter complex XylFGH involved in xylose import. Responsible for energy coupling to the transport system. This chain is Xylose import ATP-binding protein XylG, found in Shigella flexneri.